Here is a 389-residue protein sequence, read N- to C-terminus: Succinate--CoA ligase [ADP-forming] subunit beta (389 aa).

The ATP-grasp domain occupies 9-244 (KEILRKYNVP…LDEEDANEIE (236 aa)). ATP is bound by residues K46, 53–55 (GRG), E99, A102, and E107. Mg(2+) is bound by residues N199 and D213. Substrate is bound by residues N264 and 321 to 323 (GIM).

It belongs to the succinate/malate CoA ligase beta subunit family. In terms of assembly, heterotetramer of two alpha and two beta subunits. It depends on Mg(2+) as a cofactor.

It carries out the reaction succinate + ATP + CoA = succinyl-CoA + ADP + phosphate. The enzyme catalyses GTP + succinate + CoA = succinyl-CoA + GDP + phosphate. It functions in the pathway carbohydrate metabolism; tricarboxylic acid cycle; succinate from succinyl-CoA (ligase route): step 1/1. In terms of biological role, succinyl-CoA synthetase functions in the citric acid cycle (TCA), coupling the hydrolysis of succinyl-CoA to the synthesis of either ATP or GTP and thus represents the only step of substrate-level phosphorylation in the TCA. The beta subunit provides nucleotide specificity of the enzyme and binds the substrate succinate, while the binding sites for coenzyme A and phosphate are found in the alpha subunit. The sequence is that of Succinate--CoA ligase [ADP-forming] subunit beta from Cupriavidus pinatubonensis (strain JMP 134 / LMG 1197) (Cupriavidus necator (strain JMP 134)).